Here is a 410-residue protein sequence, read N- to C-terminus: Cysteine desulfurase IscS (410 aa).

Pyridoxal 5'-phosphate-binding positions include 80–81 (AT), asparagine 160, glutamine 188, and 208–210 (SGH). Residue lysine 211 is modified to N6-(pyridoxal phosphate)lysine. Threonine 248 contacts pyridoxal 5'-phosphate. Cysteine 334 (cysteine persulfide intermediate) is an active-site residue. [2Fe-2S] cluster is bound at residue cysteine 334.

Belongs to the class-V pyridoxal-phosphate-dependent aminotransferase family. NifS/IscS subfamily. As to quaternary structure, homodimer. Forms a heterotetramer with IscU, interacts with other sulfur acceptors. The cofactor is pyridoxal 5'-phosphate.

The protein localises to the cytoplasm. It catalyses the reaction (sulfur carrier)-H + L-cysteine = (sulfur carrier)-SH + L-alanine. It functions in the pathway cofactor biosynthesis; iron-sulfur cluster biosynthesis. Functionally, master enzyme that delivers sulfur to a number of partners involved in Fe-S cluster assembly, tRNA modification or cofactor biosynthesis. Catalyzes the removal of elemental sulfur atoms from cysteine to produce alanine. Functions as a sulfur delivery protein for Fe-S cluster synthesis onto IscU, an Fe-S scaffold assembly protein, as well as other S acceptor proteins. This Rickettsia peacockii (strain Rustic) protein is Cysteine desulfurase IscS.